Here is a 226-residue protein sequence, read N- to C-terminus: UPF0758 protein GTNG_2548 (226 aa).

The MPN domain maps to 104 to 226 (VIRCPEDGAK…FISLKEKGYV (123 aa)). The Zn(2+) site is built by His175, His177, and Asp188. The JAMM motif motif lies at 175 to 188 (HNHPSGDPTPSRED).

Belongs to the UPF0758 family.

The protein is UPF0758 protein GTNG_2548 of Geobacillus thermodenitrificans (strain NG80-2).